Consider the following 367-residue polypeptide: 3-dehydroquinate synthase (367 aa).

NAD(+) is bound by residues 69 to 74 (DGEAFK), 103 to 107 (GVIGD), 127 to 128 (TT), K140, and K149. Residues E182, H245, and H262 each coordinate Zn(2+).

It belongs to the sugar phosphate cyclases superfamily. Dehydroquinate synthase family. It depends on Co(2+) as a cofactor. Zn(2+) is required as a cofactor. NAD(+) serves as cofactor.

It localises to the cytoplasm. The enzyme catalyses 7-phospho-2-dehydro-3-deoxy-D-arabino-heptonate = 3-dehydroquinate + phosphate. It functions in the pathway metabolic intermediate biosynthesis; chorismate biosynthesis; chorismate from D-erythrose 4-phosphate and phosphoenolpyruvate: step 2/7. Catalyzes the conversion of 3-deoxy-D-arabino-heptulosonate 7-phosphate (DAHP) to dehydroquinate (DHQ). In Pseudomonas savastanoi pv. phaseolicola (strain 1448A / Race 6) (Pseudomonas syringae pv. phaseolicola (strain 1448A / Race 6)), this protein is 3-dehydroquinate synthase.